The primary structure comprises 486 residues: MSVTSTSLNGTFNGISEDGIEIFKGIKYANIPYRWAYAERIDDYDNGVFDCTQEGMACPQVLPFDYNIEKGPKEMPFDEFECSNLMITRPQGATNLPVFVWIHGGGNLAGNGYCSDHNPVPFVKHSIVAGRPVLHVMIEYRLSAFGYLAVPDTNGNWVGNWGARDQYTALQWISKHIVEFGGDPSQITIGGESAGSIGLHALMVHESMKPKEECIIHNVILSSGTMDRMGTGTISENAFKPIYDGIKTLVGDINTCSADELLEAQIKAGLDLGFYLQDDFFPPDWRNVRFKVSRVLLSDVIVDGTNFKNKINPAVRVTPENDFDHKVFKLYNISTEDTWEDYHYKMMLFKGDETFIRGNQQLELLFEQENIPVWRQLFDQIHPNDPSRLCHHAVDLYYMWDNWEMPEDKHAVARQYQDTLTKFVYGQDPWPVDKLHYVHDNQFEILDKSQFGDFRNVPALKFLLGFSAEELGELTKKYTGEGHYTL.

A disulfide bond links Cys58 and Cys82. Residue Ser193 is the Acyl-ester intermediate of the active site. The Charge relay system role is filled by Asp303. Asn332 carries N-linked (GlcNAc...) asparagine glycosylation. His392 acts as the Charge relay system in catalysis.

The protein belongs to the type-B carboxylesterase/lipase family.

The enzyme catalyses a triacylglycerol + H2O = a diacylglycerol + a fatty acid + H(+). The protein is Lipase 1 (LIP1) of Yarrowia lipolytica (strain CLIB 122 / E 150) (Yeast).